The primary structure comprises 281 residues: ATP phosphoribosyltransferase (281 aa).

Belongs to the ATP phosphoribosyltransferase family. Long subfamily. Mg(2+) serves as cofactor.

Its subcellular location is the cytoplasm. The catalysed reaction is 1-(5-phospho-beta-D-ribosyl)-ATP + diphosphate = 5-phospho-alpha-D-ribose 1-diphosphate + ATP. Its pathway is amino-acid biosynthesis; L-histidine biosynthesis; L-histidine from 5-phospho-alpha-D-ribose 1-diphosphate: step 1/9. Its activity is regulated as follows. Feedback inhibited by histidine. Catalyzes the condensation of ATP and 5-phosphoribose 1-diphosphate to form N'-(5'-phosphoribosyl)-ATP (PR-ATP). Has a crucial role in the pathway because the rate of histidine biosynthesis seems to be controlled primarily by regulation of HisG enzymatic activity. The polypeptide is ATP phosphoribosyltransferase (Corynebacterium glutamicum (strain R)).